Consider the following 101-residue polypeptide: Small ribosomal subunit protein uS14 (101 aa).

The tract at residues 53–72 (RDAAAVRVRNRDSHDGRPRG) is disordered. Over residues 61–70 (RNRDSHDGRP) the composition is skewed to basic and acidic residues.

This sequence belongs to the universal ribosomal protein uS14 family. In terms of assembly, part of the 30S ribosomal subunit. Contacts proteins S3 and S10.

Its function is as follows. Binds 16S rRNA, required for the assembly of 30S particles and may also be responsible for determining the conformation of the 16S rRNA at the A site. In Corynebacterium glutamicum (strain ATCC 13032 / DSM 20300 / JCM 1318 / BCRC 11384 / CCUG 27702 / LMG 3730 / NBRC 12168 / NCIMB 10025 / NRRL B-2784 / 534), this protein is Small ribosomal subunit protein uS14.